A 243-amino-acid polypeptide reads, in one-letter code: DNA repair protein RecO (243 aa).

It belongs to the RecO family.

Involved in DNA repair and RecF pathway recombination. The polypeptide is DNA repair protein RecO (Vibrio vulnificus (strain CMCP6)).